Here is a 95-residue protein sequence, read N- to C-terminus: Small ribosomal subunit protein uS19 (95 aa).

The segment at 76 to 95 is disordered; sequence PTRTFRGHGGKKADKRGKLK. Residues 80-95 show a composition bias toward basic residues; that stretch reads FRGHGGKKADKRGKLK.

This sequence belongs to the universal ribosomal protein uS19 family.

Functionally, protein S19 forms a complex with S13 that binds strongly to the 16S ribosomal RNA. The sequence is that of Small ribosomal subunit protein uS19 from Herpetosiphon aurantiacus (strain ATCC 23779 / DSM 785 / 114-95).